Consider the following 201-residue polypeptide: Adenylyl-sulfate kinase (201 aa).

35 to 42 contacts ATP; that stretch reads GLSGSGKS. Serine 109 (phosphoserine intermediate) is an active-site residue.

The protein belongs to the APS kinase family.

The catalysed reaction is adenosine 5'-phosphosulfate + ATP = 3'-phosphoadenylyl sulfate + ADP + H(+). Its pathway is sulfur metabolism; hydrogen sulfide biosynthesis; sulfite from sulfate: step 2/3. Its function is as follows. Catalyzes the synthesis of activated sulfate. This Escherichia coli O139:H28 (strain E24377A / ETEC) protein is Adenylyl-sulfate kinase.